A 202-amino-acid polypeptide reads, in one-letter code: Small ribosomal subunit protein uS4c-1 (202 aa).

The 63-residue stretch at 90–152 (MRLDNIVLRA…NKSRQLIDLN (63 aa)) folds into the S4 RNA-binding domain.

Belongs to the universal ribosomal protein uS4 family. As to quaternary structure, part of the 30S ribosomal subunit. Contacts protein S5. The interaction surface between S4 and S5 is involved in control of translational fidelity.

The protein localises to the plastid. The protein resides in the chloroplast. One of the primary rRNA binding proteins, it binds directly to 16S rRNA where it nucleates assembly of the body of the 30S subunit. In terms of biological role, with S5 and S12 plays an important role in translational accuracy. The sequence is that of Small ribosomal subunit protein uS4c-1 from Cyanidium caldarium (Red alga).